Consider the following 335-residue polypeptide: tRNA-splicing endonuclease (335 aa).

Active-site residues include tyrosine 269, histidine 280, and lysine 311.

It belongs to the tRNA-intron endonuclease family. Archaeal long subfamily. As to quaternary structure, homodimer.

It carries out the reaction pretRNA = a 3'-half-tRNA molecule with a 5'-OH end + a 5'-half-tRNA molecule with a 2',3'-cyclic phosphate end + an intron with a 2',3'-cyclic phosphate and a 5'-hydroxyl terminus.. Functionally, endonuclease that removes tRNA introns. Cleaves pre-tRNA at the 5'- and 3'-splice sites to release the intron. The products are an intron and two tRNA half-molecules bearing 2',3' cyclic phosphate and 5'-OH termini. Recognizes a pseudosymmetric substrate in which 2 bulged loops of 3 bases are separated by a stem of 4 bp. This chain is tRNA-splicing endonuclease, found in Haloarcula marismortui (strain ATCC 43049 / DSM 3752 / JCM 8966 / VKM B-1809) (Halobacterium marismortui).